Here is a 154-residue protein sequence, read N- to C-terminus: Actin-related protein 2/3 complex subunit 5 (154 aa).

Threonine 142 bears the Phosphothreonine mark.

This sequence belongs to the ARPC5 family. In terms of assembly, component of the Arp2/3 complex composed of ARP2, ARP3, ARC40/p41-ARC, ARC35/p34-ARC, ARC18/p21-ARC, ARC19/p20-ARC and ARC16/p16-ARC.

It is found in the cytoplasm. The protein localises to the cytoskeleton. It localises to the actin patch. Functionally, functions as a component of the Arp2/3 complex which is involved in regulation of actin polymerization and together with an activating nucleation-promoting factor (NPF) mediates the formation of branched actin networks. This Saccharomyces cerevisiae (strain ATCC 204508 / S288c) (Baker's yeast) protein is Actin-related protein 2/3 complex subunit 5 (ARC15).